We begin with the raw amino-acid sequence, 543 residues long: Chaperonin GroEL 1 (543 aa).

ATP is bound by residues 29–32 (TLGP), 86–90 (DGTTT), G413, 479–481 (NAA), and D495. Residues 524–543 (PEPKDAAPAGVGGGGGDFDY) form a disordered region. Gly residues predominate over residues 533–543 (GVGGGGGDFDY).

Belongs to the chaperonin (HSP60) family. In terms of assembly, forms a cylinder of 14 subunits composed of two heptameric rings stacked back-to-back. Interacts with the co-chaperonin GroES.

The protein resides in the cytoplasm. It carries out the reaction ATP + H2O + a folded polypeptide = ADP + phosphate + an unfolded polypeptide.. Together with its co-chaperonin GroES, plays an essential role in assisting protein folding. The GroEL-GroES system forms a nano-cage that allows encapsulation of the non-native substrate proteins and provides a physical environment optimized to promote and accelerate protein folding. In Anabaena sp. (strain L31), this protein is Chaperonin GroEL 1.